Consider the following 411-residue polypeptide: Imidazolonepropionase (411 aa).

Fe(3+)-binding residues include H75 and H77. Positions 75 and 77 each coordinate Zn(2+). 4-imidazolone-5-propanoate is bound by residues R84, Y147, and H180. Position 147 (Y147) interacts with N-formimidoyl-L-glutamate. H245 is a binding site for Fe(3+). H245 serves as a coordination point for Zn(2+). Q248 lines the 4-imidazolone-5-propanoate pocket. A Fe(3+)-binding site is contributed by D320. D320 serves as a coordination point for Zn(2+). Positions 322 and 324 each coordinate N-formimidoyl-L-glutamate. Residue T325 coordinates 4-imidazolone-5-propanoate.

The protein belongs to the metallo-dependent hydrolases superfamily. HutI family. The cofactor is Zn(2+). It depends on Fe(3+) as a cofactor.

Its subcellular location is the cytoplasm. The enzyme catalyses 4-imidazolone-5-propanoate + H2O = N-formimidoyl-L-glutamate. It functions in the pathway amino-acid degradation; L-histidine degradation into L-glutamate; N-formimidoyl-L-glutamate from L-histidine: step 3/3. Catalyzes the hydrolytic cleavage of the carbon-nitrogen bond in imidazolone-5-propanoate to yield N-formimidoyl-L-glutamate. It is the third step in the universal histidine degradation pathway. This Aeromonas hydrophila subsp. hydrophila (strain ATCC 7966 / DSM 30187 / BCRC 13018 / CCUG 14551 / JCM 1027 / KCTC 2358 / NCIMB 9240 / NCTC 8049) protein is Imidazolonepropionase.